Consider the following 383-residue polypeptide: Lipid-A-disaccharide synthase (383 aa).

Belongs to the LpxB family.

It carries out the reaction 2-N,3-O-bis[(3R)-3-hydroxytetradecanoyl]-alpha-D-glucosaminyl 1-phosphate + UDP-2-N,3-O-bis[(3R)-3-hydroxytetradecanoyl]-alpha-D-glucosamine = lipid A disaccharide (E. coli) + UDP + H(+). The catalysed reaction is a lipid X + a UDP-2-N,3-O-bis[(3R)-3-hydroxyacyl]-alpha-D-glucosamine = a lipid A disaccharide + UDP + H(+). Its pathway is glycolipid biosynthesis; lipid IV(A) biosynthesis; lipid IV(A) from (3R)-3-hydroxytetradecanoyl-[acyl-carrier-protein] and UDP-N-acetyl-alpha-D-glucosamine: step 5/6. Condensation of UDP-2,3-diacylglucosamine and 2,3-diacylglucosamine-1-phosphate to form lipid A disaccharide, a precursor of lipid A, a phosphorylated glycolipid that anchors the lipopolysaccharide to the outer membrane of the cell. The chain is Lipid-A-disaccharide synthase from Pectobacterium atrosepticum (strain SCRI 1043 / ATCC BAA-672) (Erwinia carotovora subsp. atroseptica).